Reading from the N-terminus, the 218-residue chain is Large ribosomal subunit protein uL3 (218 aa).

Residues 133–158 (RGQGASHGAQAVHRRPGSIGGCATPG) are disordered.

It belongs to the universal ribosomal protein uL3 family. As to quaternary structure, part of the 50S ribosomal subunit. Forms a cluster with proteins L14 and L19.

In terms of biological role, one of the primary rRNA binding proteins, it binds directly near the 3'-end of the 23S rRNA, where it nucleates assembly of the 50S subunit. This is Large ribosomal subunit protein uL3 from Mycolicibacterium vanbaalenii (strain DSM 7251 / JCM 13017 / BCRC 16820 / KCTC 9966 / NRRL B-24157 / PYR-1) (Mycobacterium vanbaalenii).